The following is a 93-amino-acid chain: Alpha-defensin 7 (93 aa).

An N-terminal signal peptide occupies residues 1–19 (MKTLILLSALVLLAFQVQA). A propeptide spanning residues 20 to 58 (DPIQNTDEETKTEEQPGEDDQAVSVSFGDPEGSSLQEES) is cleaved from the precursor. Residues 22–56 (IQNTDEETKTEEQPGEDDQAVSVSFGDPEGSSLQE) form a disordered region. Intrachain disulfides connect Cys64–Cys92, Cys66–Cys81, and Cys71–Cys91.

This sequence belongs to the alpha-defensin family. In terms of tissue distribution, paneth cells of the small bowel.

It is found in the secreted. Probably contributes to the antimicrobial barrier function of the small bowel mucosa. This Mus musculus (Mouse) protein is Alpha-defensin 7 (Defa7).